The chain runs to 149 residues: D-aminoacyl-tRNA deacylase (149 aa).

The Gly-cisPro motif, important for rejection of L-amino acids signature appears at Gly137 to Pro138.

The protein belongs to the DTD family. As to quaternary structure, homodimer.

The protein resides in the cytoplasm. The catalysed reaction is glycyl-tRNA(Ala) + H2O = tRNA(Ala) + glycine + H(+). It carries out the reaction a D-aminoacyl-tRNA + H2O = a tRNA + a D-alpha-amino acid + H(+). An aminoacyl-tRNA editing enzyme that deacylates mischarged D-aminoacyl-tRNAs. Also deacylates mischarged glycyl-tRNA(Ala), protecting cells against glycine mischarging by AlaRS. Acts via tRNA-based rather than protein-based catalysis; rejects L-amino acids rather than detecting D-amino acids in the active site. By recycling D-aminoacyl-tRNA to D-amino acids and free tRNA molecules, this enzyme counteracts the toxicity associated with the formation of D-aminoacyl-tRNA entities in vivo and helps enforce protein L-homochirality. In Leuconostoc mesenteroides subsp. mesenteroides (strain ATCC 8293 / DSM 20343 / BCRC 11652 / CCM 1803 / JCM 6124 / NCDO 523 / NBRC 100496 / NCIMB 8023 / NCTC 12954 / NRRL B-1118 / 37Y), this protein is D-aminoacyl-tRNA deacylase.